The primary structure comprises 1486 residues: MLYDKSLERDNCGFGLIAHIEGEPSHKVVRTAIHALARMQHRGAILADGKTGDGCGLLLQKPDRFFRIVAQERGWRLAKNYAVGMLFLNKDPELAAAARRIVEEELQRETLSIVGWRDVPTNEGVLGEIALSSLPRIEQIFVNAPAGWRPRDMERRLFIARRRIEKRLEADKDFYVCSLSNLVNIYKGLCMPTDLPRFYLDLADLRLESAICLFHQRFSTNTVPRWPLAQPFRYLAHNGEINTITGNRQWARARTYKFQTPLIPDLHDAAPFVNETGSDSSSMDNMLELLLAGGMDIIRAMRLLVPPAWQNNPDMDPELRAFFDFNSMHMEPWDGPAGIVMSDGRFAACNLDRNGLRPARYVITKDKLITCASEVGIWDYQPDEVVEKGRVGPGELMVIDTRSGRILHSAETDDDLKSRHPYKEWMEKNVRRLVPFEDLPDEEVGSRELDDDTLASYQKQFNYSAEELDSVIRVLGENGQEAVGSMGDDTPFAVLSSQPRIIYDYFRQQFAQVTNPPIDPLREAHVMSLATSIGREMNVFCEAEGQAHRLSFKSPILLYSDFKQLTTMKEEHYRADTLDITFDVTKTTLEATVKELCDKAEKMVRSGTVLLVLSDRNIAKDRLPVPAPMAVGAIQTRLVDQSLRCDANIIVETASARDPHHFAVLLGFGATAIYPYLAYETLGRLVDTHAIAKDYRTVMLNYRNGINKGLYKIMSKMGISTIASYRCSKLFEAVGLHDDVVGLCFQGAVSRIGGASFEDFQQDLLNLSKRAWLARKPISQGGLLKYVHGGEYHAYNPDVVRTLQQAVQSGEYSDYQEYAKLVNERPATTLRDLLAITPGENAVNIADVEPASELFKRFDTAAMSIGALSPEAHEALAEAMNSIGGNSNSGEGGEDPARYGTNKVSRIKQVASGRFGVTPAYLVNADVIQIKVAQGAKPGEGGQLPGDKVTPYIAKLRYSVPGVTLISPPPHHDIYSIEDLAQLIFDLKQVNPKAMISVKLVSEPGVGTIATGVAKAYADLITIAGYDGGTGASPLSSVKYAGCPWELGLVETQQALVANGLRHKIRLQVDGGLKTGVDIIKAAILGAESFGFGTGPMVALGCKYLRICHLNNCATGVATQDDKLRKNHYHGLPFKVTNYFEFIARETRELMAQLGVTRLVDLIGRTDLLKELDGFTAKQQKLALSKLLETAEPHPGKALYCTENNPPFDNGLLNAQLLQQAKPFVDERQSKTFWFDIRNTDRSVGASLSGYIAQTHGDQGLAADPIKAYFNGTAGQSFGVWNAGGVELYLTGDANDYVGKGMAGGLIAIRPPVGSAFRSHEASIIGNTCLYGATGGRLYAAGRAGERFGVRNSGAITVVEGIGDNGCEYMTGGIVCILGKTGVNFGAGMTGGFAYVLDESGDFRKRVNPELVEVLSVDALAIHEEHLRGLITEHVQHTGSQRGEEILANWSTFATKFALVKPKSSDVKALLGHRSRSAAELRVQAQ.

Positions 1–11 (MLYDKSLERDN) are excised as a propeptide. Cysteine 12 acts as the Nucleophile in catalysis. The Glutamine amidotransferase type-2 domain maps to 12–402 (CGFGLIAHIE…PGELMVIDTR (391 aa)). 1049–1101 (LVETQQALVANGLRHKIRLQVDGGLKTGVDIIKAAILGAESFGFGTGPMVALG) is a binding site for FMN. The [3Fe-4S] cluster site is built by cysteine 1102, cysteine 1108, and cysteine 1113.

It belongs to the glutamate synthase family. Aggregate of 4 catalytic active heterodimers, consisting of a large and a small subunit. [3Fe-4S] cluster is required as a cofactor. FAD serves as cofactor. The cofactor is FMN.

The catalysed reaction is 2 L-glutamate + NADP(+) = L-glutamine + 2-oxoglutarate + NADPH + H(+). It participates in amino-acid biosynthesis; L-glutamate biosynthesis via GLT pathway; L-glutamate from 2-oxoglutarate and L-glutamine (NADP(+) route): step 1/1. Its pathway is energy metabolism; nitrogen metabolism. In terms of biological role, catalyzes the conversion of L-glutamine and 2-oxoglutarate into two molecules of L-glutamate. This Escherichia coli (strain K12) protein is Glutamate synthase [NADPH] large chain (gltB).